Reading from the N-terminus, the 184-residue chain is MGISRDSRHKRRLTGGRYPVHKKKRKYELGRPSSNTKLGSRLVRKVRCRGGNLKFRALRLDSGNFSWGSQNVTRKTRVMDVVYNASSNELVRTKTLVKNAIVTVDPTPFKLWFKTHYGVELEDPQASEKVAGLVPKTLLEQFSSGRLLACISSRPGQCGRCDGYVLEGEELNFYRRRMDKKKRV.

The tract at residues M1–K23 is disordered. Residues S7–K23 are compositionally biased toward basic residues.

This sequence belongs to the eukaryotic ribosomal protein eS8 family.

The chain is Small ribosomal subunit protein eS8 (RPS8) from Theileria annulata.